The primary structure comprises 589 residues: UvrABC system protein C (589 aa).

The 78-residue stretch at 10–87 (ESSGVYLMKK…IKKYSPKYNI (78 aa)) folds into the GIY-YIG domain. Residues 197–232 (SKLINELTALMNKASQDMDFEKSIIYREQIKELKSI) form the UVR domain.

Belongs to the UvrC family. In terms of assembly, interacts with UvrB in an incision complex.

It is found in the cytoplasm. The UvrABC repair system catalyzes the recognition and processing of DNA lesions. UvrC both incises the 5' and 3' sides of the lesion. The N-terminal half is responsible for the 3' incision and the C-terminal half is responsible for the 5' incision. The protein is UvrABC system protein C of Fusobacterium nucleatum subsp. nucleatum (strain ATCC 25586 / DSM 15643 / BCRC 10681 / CIP 101130 / JCM 8532 / KCTC 2640 / LMG 13131 / VPI 4355).